Here is a 256-residue protein sequence, read N- to C-terminus: Phosphonates import ATP-binding protein PhnC (256 aa).

Residues 5–253 (LRITGLVKEY…MLKTIYGGES (249 aa)) form the ABC transporter domain. 38–45 (GPSGTGKS) contributes to the ATP binding site.

The protein belongs to the ABC transporter superfamily. Phosphonates importer (TC 3.A.1.9.1) family. The complex is composed of two ATP-binding proteins (PhnC), two transmembrane proteins (PhnE) and a solute-binding protein (PhnD).

The protein resides in the cell inner membrane. The catalysed reaction is phosphonate(out) + ATP + H2O = phosphonate(in) + ADP + phosphate + H(+). Part of the ABC transporter complex PhnCDE involved in phosphonates import. Responsible for energy coupling to the transport system. This is Phosphonates import ATP-binding protein PhnC from Bordetella parapertussis (strain 12822 / ATCC BAA-587 / NCTC 13253).